A 427-amino-acid chain; its full sequence is Glutamyl-tRNA(Gln) amidotransferase subunit D (427 aa).

Residues 1–18 (MTADPGDRVRVTHGDASH) are compositionally biased toward basic and acidic residues. The segment at 1 to 20 (MTADPGDRVRVTHGDASHEG) is disordered. Residues 80-413 (PTIALISTGG…DDPEAAMQES (334 aa)) enclose the Asparaginase/glutaminase domain. Active-site residues include threonine 90, threonine 166, aspartate 167, and lysine 243.

Belongs to the asparaginase 1 family. GatD subfamily. As to quaternary structure, heterodimer of GatD and GatE.

It carries out the reaction L-glutamyl-tRNA(Gln) + L-glutamine + ATP + H2O = L-glutaminyl-tRNA(Gln) + L-glutamate + ADP + phosphate + H(+). In terms of biological role, allows the formation of correctly charged Gln-tRNA(Gln) through the transamidation of misacylated Glu-tRNA(Gln) in organisms which lack glutaminyl-tRNA synthetase. The reaction takes place in the presence of glutamine and ATP through an activated gamma-phospho-Glu-tRNA(Gln). The GatDE system is specific for glutamate and does not act on aspartate. This is Glutamyl-tRNA(Gln) amidotransferase subunit D from Halobacterium salinarum (strain ATCC 29341 / DSM 671 / R1).